The following is a 955-amino-acid chain: 4-alpha-glucanotransferase DPE2 (955 aa).

Met1 carries the N-acetylmethionine modification. CBM20 domains follow at residues 13–122 (KSSK…LWQS) and 157–270 (SDQD…PWRG). The tract at residues 925-955 (SGRSVPANVSGEDINKSRGEVIANGSTKPNP) is disordered.

This sequence belongs to the disproportionating enzyme family.

The protein resides in the cytoplasm. Its subcellular location is the cytosol. It catalyses the reaction Transfers a segment of a (1-&gt;4)-alpha-D-glucan to a new position in an acceptor, which may be glucose or a (1-&gt;4)-alpha-D-glucan.. Its activity is regulated as follows. Inactivated in response to cold stress. In terms of biological role, cytosolic alpha-glucanotransferase essential for the cytosolic metabolism of maltose, an intermediate on the pathway by which starch is converted to sucrose in leaves at night. Metabolizes maltose exported from the chloroplast and is specific for beta-maltose. May play a role in freezing tolerance. Temperature drop induces inactivation of DPE2 that leads to rapid accumulation of maltose, a solute that protects cells from freezing damage. The protein is 4-alpha-glucanotransferase DPE2 (DPE2) of Arabidopsis thaliana (Mouse-ear cress).